Reading from the N-terminus, the 153-residue chain is uncharacterized protein (153 aa).

2 disordered regions span residues 30–66 and 79–153; these read GPTVDTKRQELPILSEDSDGSDKEDEQPQVVVLRKGD and IKEN…DYDD. The span at 45 to 56 shows a compositional bias: acidic residues; sequence EDSDGSDKEDEQ. Composition is skewed to polar residues over residues 106–116 and 130–144; these read GDTTSGVNACS and GTKSSQKQVKNSSLL.

This is an uncharacterized protein from Xenopus laevis (African clawed frog).